The following is a 34-amino-acid chain: Trypsin inhibitor 2 (34 aa).

A cross-link (cyclopeptide (Ser-Gly)) is located at residues 1–34 (SGSDGGVCPKILKKCRRDSDCPGACICRGNGYCG). Residues 4-5 (DG) constitute a cross-link ((2-aminosuccinimidyl)acetic acid (Asp-Gly); alternate). A cross-link (isoaspartyl glycine isopeptide (Asp-Gly); alternate) is located at residues 4 to 5 (DG). 3 disulfides stabilise this stretch: C8/C25, C15/C27, and C21/C33.

Post-translationally, a cyclic succinimide probably forms by loss of water between Asp-4 and Gly-5, that can then rehydrate to either the original peptide bond or to a beta-aspartyl isopeptide bond. Three isoforms of MCoTI-II are detected, two with the parent molecular weight, corresponding to the unmodified and proposed isopeptide forms, and one with a molecular weight 18 Da lower, corresponding to a succinimide cross-linked form. In terms of processing, this is a cyclic peptide.

Its subcellular location is the secreted. Inhibits trypsin; probably participates in a plant defense mechanism. This is Trypsin inhibitor 2 from Momordica cochinchinensis (Spiny bitter cucumber).